The following is a 415-amino-acid chain: Diaminopimelate decarboxylase (415 aa).

Lys-54 carries the post-translational modification N6-(pyridoxal phosphate)lysine. Residues Gly-223 and Glu-264–Arg-267 contribute to the pyridoxal 5'-phosphate site. Substrate contacts are provided by Arg-267, Arg-303, and Tyr-307. Cys-338 functions as the Proton donor in the catalytic mechanism. Residues Glu-339 and Tyr-374 each contribute to the substrate site. Residue Tyr-374 participates in pyridoxal 5'-phosphate binding.

Belongs to the Orn/Lys/Arg decarboxylase class-II family. LysA subfamily. As to quaternary structure, homodimer. Requires pyridoxal 5'-phosphate as cofactor.

The catalysed reaction is meso-2,6-diaminopimelate + H(+) = L-lysine + CO2. It participates in amino-acid biosynthesis; L-lysine biosynthesis via DAP pathway; L-lysine from DL-2,6-diaminopimelate: step 1/1. In terms of biological role, specifically catalyzes the decarboxylation of meso-diaminopimelate (meso-DAP) to L-lysine. The polypeptide is Diaminopimelate decarboxylase (Buchnera aphidicola subsp. Acyrthosiphon pisum (strain APS) (Acyrthosiphon pisum symbiotic bacterium)).